Consider the following 161-residue polypeptide: Globin CTT-VIIB-5/CTT-VIIB-9 (161 aa).

The signal sequence occupies residues 1 to 16 (MKFFAVLALCIVGAIA). A Globin domain is found at 18–161 (PLTADEASLV…NTFAIVVPRL (144 aa)). Residues His76 and His111 each coordinate heme b.

Belongs to the globin family. Homodimer.

In Chironomus thummi thummi (Midge), this protein is Globin CTT-VIIB-5/CTT-VIIB-9 (CTT-7B5).